The sequence spans 832 residues: Protein wech (832 aa).

Positions methionine 1–methionine 14 are enriched in polar residues. Positions methionine 1–asparagine 42 are disordered. Residues alanine 15–asparagine 32 are compositionally biased toward low complexity. Residue serine 107 is modified to Phosphoserine. 2 consecutive B box-type zinc fingers follow at residues asparagine 118 to leucine 163 and serine 184 to isoleucine 224. Cysteine 123, cysteine 126, cysteine 145, histidine 149, cysteine 189, histidine 192, cysteine 211, and histidine 216 together coordinate Zn(2+). Phosphoserine is present on residues serine 470, serine 475, and serine 506. NHL repeat units lie at residues serine 537–aspartate 580, lysine 584–serine 627, leucine 631–glutamate 674, glutamine 680–aspartate 722, and leucine 727–asparagine 770.

Interacts with the head domain of rhea and the kinase domain of Ilk. Interacts with AGO1. Interacts with mei-P26. Expressed in ovarian germline stem cells (at protein level). Expressed ubiquitously in all epithelial cells during early stages of embryogenesis. Specifically expressed at epidermal muscle attachment site.

Functionally, vital for larval development. Plays a role in tumor formation. A crucial component for the physical link between integrins and the cytoskeleton in the epidermal muscle attachment sites. This chain is Protein wech (wech), found in Drosophila melanogaster (Fruit fly).